The primary structure comprises 237 residues: UPF0758 protein Veis_1654 (237 aa).

In terms of domain architecture, MPN spans 115–237; the sequence is VFDTPDAVKH…ALSMAEMGLL (123 aa). His-186, His-188, and Asp-199 together coordinate Zn(2+). Residues 186 to 199 carry the JAMM motif motif; it reads HNHPSGSVQPSRAD.

It belongs to the UPF0758 family.

The protein is UPF0758 protein Veis_1654 of Verminephrobacter eiseniae (strain EF01-2).